Here is a 1342-residue protein sequence, read N- to C-terminus: DNA-directed RNA polymerase subunit beta (1342 aa).

It belongs to the RNA polymerase beta chain family. The RNAP catalytic core consists of 2 alpha, 1 beta, 1 beta' and 1 omega subunit. When a sigma factor is associated with the core the holoenzyme is formed, which can initiate transcription.

The enzyme catalyses RNA(n) + a ribonucleoside 5'-triphosphate = RNA(n+1) + diphosphate. Its function is as follows. DNA-dependent RNA polymerase catalyzes the transcription of DNA into RNA using the four ribonucleoside triphosphates as substrates. This chain is DNA-directed RNA polymerase subunit beta, found in Pseudoalteromonas atlantica (strain T6c / ATCC BAA-1087).